The following is a 27-amino-acid chain: uncharacterized protein (27 aa).

Its subcellular location is the mitochondrion. This is an uncharacterized protein from Emericella nidulans (Aspergillus nidulans).